We begin with the raw amino-acid sequence, 407 residues long: Phosphoglycerate kinase (407 aa).

Substrate contacts are provided by residues 21–23, R36, 59–62, R116, and R156; these read DLN and HQGR. Residues E332 and 358 to 361 each bind ATP; that span reads GGDT.

The protein belongs to the phosphoglycerate kinase family. Monomer.

Its subcellular location is the cytoplasm. The catalysed reaction is (2R)-3-phosphoglycerate + ATP = (2R)-3-phospho-glyceroyl phosphate + ADP. It participates in carbohydrate degradation; glycolysis; pyruvate from D-glyceraldehyde 3-phosphate: step 2/5. This chain is Phosphoglycerate kinase, found in Halorubrum lacusprofundi (strain ATCC 49239 / DSM 5036 / JCM 8891 / ACAM 34).